The sequence spans 758 residues: Putative transcriptional regulatory protein YJL206C (758 aa).

Residues 47-73 (CIACRKRKVRCSGNIPCRLCQTNSYEC) constitute a DNA-binding region (zn(2)-C6 fungal-type).

Belongs to the ASG1 family.

The protein resides in the nucleus. The chain is Putative transcriptional regulatory protein YJL206C from Saccharomyces cerevisiae (strain ATCC 204508 / S288c) (Baker's yeast).